Consider the following 92-residue polypeptide: Phospholemman (92 aa).

A signal peptide spans 1 to 20 (MASLGHILVFCVGLLTMAKA). Topologically, residues 21 to 35 (ESPKEHDPFTYDYQS) are extracellular. The helical transmembrane segment at 36 to 56 (LQIGGLVIAGILFILGILIVL) threads the bilayer. Over 57–92 (SRRCRCKFNQQQRTGEPDEEEGTFRSSIRRLSTRRR) the chain is Cytoplasmic. Cys60 is lipidated: S-palmitoyl cysteine. An S-glutathionyl cysteine; alternate modification is found at Cys62. Residue Cys62 is the site of S-palmitoyl cysteine; alternate attachment. Residues 65–92 (NQQQRTGEPDEEEGTFRSSIRRLSTRRR) are disordered. Phosphothreonine is present on Thr79. Position 82 is a phosphoserine (Ser82). Ser83 carries the post-translational modification Phosphoserine; by PKA and PKC. Over residues 83–92 (SIRRLSTRRR) the composition is skewed to basic residues. The residue at position 88 (Ser88) is a Phosphoserine; by PKA. Thr89 carries the phosphothreonine; by PKC modification.

The protein belongs to the FXYD family. In terms of assembly, homotetramer. Monomer. Regulatory subunit of the sodium/potassium-transporting ATPase (NKA) which is composed of a catalytic alpha subunit, an auxiliary non-catalytic beta subunit and an additional regulatory subunit. The monomeric form associates with NKA while the oligomeric form does not. Interacts with the catalytic alpha-1 subunit ATP1A1. Also interacts with the catalytic alpha-2 and alpha-3 subunits ATP1A2 and ATP1A3. Very little interaction with ATP1A1, ATP1A2 or ATP1A3 when phosphorylated at Ser-83. Interacts with the non-catalytic beta-1 subunit ATP1B1. Oxidative stress decreases interaction with ATP1A1 but increases interaction with ATP1B1. In terms of processing, major plasma membrane substrate for cAMP-dependent protein kinase (PKA) and protein kinase C (PKC) in several different tissues. Phosphorylated in response to insulin and adrenergic stimulation. Phosphorylation at Ser-88 stimulates sodium/potassium-transporting ATPase activity while the unphosphorylated form inhibits sodium/potassium-transporting ATPase activity. Phosphorylation increases tetramerization, decreases binding to ATP1A1 and reduces inhibition of ATP1A1 activity. Phosphorylation at Ser-83 leads to greatly reduced interaction with ATP1A1, ATP1A2 and ATP1A3. May be phosphorylated by DMPK. Post-translationally, palmitoylation increases half-life and stability and is enhanced upon phosphorylation at Ser-88 by PKA. As to expression, highest expression in skeletal muscle and heart. Moderate levels in brain, placenta, lung, liver, pancreas, uterus, bladder, prostate, small intestine and colon with mucosal lining. Very low levels in kidney, colon and small intestine without mucosa, prostate without endothelial lining, spleen, and testis.

It localises to the cell membrane. It is found in the sarcolemma. The protein localises to the apical cell membrane. Its subcellular location is the membrane. The protein resides in the caveola. It localises to the T-tubule. Associates with and regulates the activity of the sodium/potassium-transporting ATPase (NKA) which transports Na(+) out of the cell and K(+) into the cell. Inhibits NKA activity in its unphosphorylated state and stimulates activity when phosphorylated. Reduces glutathionylation of the NKA beta-1 subunit ATP1B1, thus reversing glutathionylation-mediated inhibition of ATP1B1. Contributes to female sexual development by maintaining the excitability of neurons which secrete gonadotropin-releasing hormone. The chain is Phospholemman from Homo sapiens (Human).